The following is a 90-amino-acid chain: Probable Fe(2+)-trafficking protein (90 aa).

This sequence belongs to the Fe(2+)-trafficking protein family.

Its function is as follows. Could be a mediator in iron transactions between iron acquisition and iron-requiring processes, such as synthesis and/or repair of Fe-S clusters in biosynthetic enzymes. The polypeptide is Probable Fe(2+)-trafficking protein (Nitrosomonas eutropha (strain DSM 101675 / C91 / Nm57)).